A 322-amino-acid polypeptide reads, in one-letter code: Thymidylate synthase (322 aa).

DUMP is bound by residues R25 and 184 to 185; that span reads RR. C204 serves as the catalytic Nucleophile. DUMP is bound by residues 224-227, N235, and 265-267; these read RSGD and HIY. Residue D227 participates in (6R)-5,10-methylene-5,6,7,8-tetrahydrofolate binding. A321 serves as a coordination point for (6R)-5,10-methylene-5,6,7,8-tetrahydrofolate.

The protein belongs to the thymidylate synthase family. Bacterial-type ThyA subfamily. As to quaternary structure, homodimer.

Its subcellular location is the cytoplasm. It carries out the reaction dUMP + (6R)-5,10-methylene-5,6,7,8-tetrahydrofolate = 7,8-dihydrofolate + dTMP. It participates in pyrimidine metabolism; dTTP biosynthesis. Catalyzes the reductive methylation of 2'-deoxyuridine-5'-monophosphate (dUMP) to 2'-deoxythymidine-5'-monophosphate (dTMP) while utilizing 5,10-methylenetetrahydrofolate (mTHF) as the methyl donor and reductant in the reaction, yielding dihydrofolate (DHF) as a by-product. This enzymatic reaction provides an intracellular de novo source of dTMP, an essential precursor for DNA biosynthesis. The protein is Thymidylate synthase of Leuconostoc mesenteroides subsp. mesenteroides (strain ATCC 8293 / DSM 20343 / BCRC 11652 / CCM 1803 / JCM 6124 / NCDO 523 / NBRC 100496 / NCIMB 8023 / NCTC 12954 / NRRL B-1118 / 37Y).